The primary structure comprises 295 residues: Guided entry of tail-anchored proteins factor CAMLG (295 aa).

2 disordered regions span residues 1–73 and 127–148; these read MEPM…ILNP and GVELRQRNRGDLTADSAPRGSH. Residues 1–188 lie on the Cytoplasmic side of the membrane; it reads MEPMPSATDG…RTTEEFDSFR (188 aa). The segment covering 15-24 has biased composition (polar residues); that stretch reads ATPSGLSASQ. Serine 53 is subject to Phosphoserine. The segment covering 127–138 has biased composition (basic and acidic residues); the sequence is GVELRQRNRGDL. The chain crosses the membrane as a helical span at residues 189 to 206; it reads IFRLVGCALLALVVRAFV. The Lumenal portion of the chain corresponds to 207 to 208; the sequence is CK. An intrachain disulfide couples cysteine 207 to cysteine 283. Residues 209–227 form a helical membrane-spanning segment; it reads YLSIFAPFLTLQLAYMGLY. Topologically, residues 228–268 are cytoplasmic; that stretch reads KYFPKGEKKVKTTVLTAALLLSGIPAEVINRSMDTYSKMGE. A helical membrane pass occupies residues 269–287; sequence VFTDLCVYFFTFIFCHEVL. The Lumenal portion of the chain corresponds to 288 to 295; it reads EYWGPEVP.

In terms of assembly, component of the Golgi to ER traffic (GET) complex, which is composed of GET1/WRB, CAMLG/GET2 and GET3/TRC40. Within the complex, GET1 and CAMLG form a heterotetramer which is stabilized by phosphatidylinositol binding and which binds to the GET3 homodimer. Interacts (via C-terminus) with GET1. Interacts (via N-terminus) with GET3. GET3 shows a higher affinity for CAMLG than for GET1. Interacts (via N-terminus) with TNFRSF13B/TACI (via C-terminus). In the central nervous system, expressed in astrocytes, microglia and neurons (at protein level).

The protein localises to the endoplasmic reticulum membrane. Functionally, required for the post-translational delivery of tail-anchored (TA) proteins to the endoplasmic reticulum. Together with GET1/WRB, acts as a membrane receptor for soluble GET3/TRC40, which recognizes and selectively binds the transmembrane domain of TA proteins in the cytosol. Required for the stability of GET1. Stimulates calcium signaling in T cells through its involvement in elevation of intracellular calcium. Essential for the survival of peripheral follicular B cells. In Rattus norvegicus (Rat), this protein is Guided entry of tail-anchored proteins factor CAMLG.